The following is a 139-amino-acid chain: Mitochondrial intermembrane space import and assembly protein 40 (139 aa).

3 disulfide bridges follow: Cys-53-Cys-55, Cys-64-Cys-97, and Cys-74-Cys-87. Residues 61–105 (SGPCGEQFKSAFSCFHYSQEEIKGSDCLDQFRAMQECMQKYPDIY) enclose the CHCH domain. Short sequence motifs (cx9C motif) lie at residues 64–74 (CGEQFKSAFSC) and 87–97 (CLDQFRAMQEC). The segment at 102 to 139 (PDIYPQEDDEDEAEKEKQNKEAEAFSTETSDTKEESSS) is disordered. A compositionally biased stretch (basic and acidic residues) spans 115 to 124 (EKEKQNKEAE).

As to quaternary structure, monomer. Can form homooligomers.

The protein resides in the mitochondrion intermembrane space. In terms of biological role, central component of a redox-sensitive mitochondrial intermembrane space import machinery which is required for the biogenesis of respiratory chain complexes. Functions as chaperone and catalyzes the formation of disulfide bonds in substrate proteins, such as COX17 or MICU1. Required for the import and folding of small cysteine-containing proteins (small Tim) in the mitochondrial intermembrane space (IMS). Precursor proteins to be imported into the IMS are translocated in their reduced form into the mitochondria. This chain is Mitochondrial intermembrane space import and assembly protein 40 (chchd4), found in Xenopus tropicalis (Western clawed frog).